The sequence spans 2467 residues: Polyprotein P1234 (2467 aa).

The region spanning 27 to 258 (ESQQVTPNDH…ESRKLLRSWH (232 aa)) is the Alphavirus-like MT domain. A nsP1 membrane-binding region spans residues 243–262 (GSTLYTESRKLLRSWHLPSV). Residues Cys-416 and Cys-418 are each lipidated (S-palmitoyl cysteine; by host). Residues 689 to 841 (DLINPPFHEF…HNICTRVLHK (153 aa)) form the (+)RNA virus helicase ATP-binding domain. 720–727 (GVPGSGKS) is a binding site for a ribonucleoside 5'-triphosphate. Residues 842–990 (SISRRCTLPV…LEEWHEEHDG (149 aa)) form the (+)RNA virus helicase C-terminal domain. Residues 1003-1325 (DPFQNKAKVC…QKLSSMYACN (323 aa)) enclose the Peptidase C9 domain. Residues 1004–1023 (PFQNKAKVCWAKCLVQVLET) form a nucleolus localization signal region. Cys-1012 (for cysteine protease nsP2 activity) is an active-site residue. The short motif at 1056–1065 (TRYYGVDLDS) is the Nuclear export signal element. The active-site For cysteine protease nsP2 activity is His-1081. Residues 1180–1184 (PHKRV) carry the Nuclear localization signal motif. The region spanning 1333 to 1492 (APSYRVRRAD…KIQEAIDRRT (160 aa)) is the Macro domain. ADP-D-ribose contacts are provided by Asp-1342, Asn-1356, Gly-1364, Gly-1444, and Phe-1446. Residues Cys-1594, Cys-1596, Cys-1619, and Cys-1637 each coordinate Zn(2+). Residues 1768–1803 (KVATEPPLEPEAPIPAPRKRRTTSTSPPHNPEDFVP) form a disordered region. A compositionally biased stretch (pro residues) spans 1774–1783 (PLEPEAPIPA). 2 consecutive short sequence motifs (FGDF; binding to host G3BP1) follow at residues 1820-1823 (FGDL) and 1841-1844 (FGDI). Residues 2221–2336 (DAVLETDIAS…HGVRSDPLMA (116 aa)) form the RdRp catalytic domain.

As to quaternary structure, interacts with non-structural protein 3. Interacts with RNA-directed RNA polymerase nsP4. Interacts with protease nsP2. interacts with itself. In terms of assembly, interacts with mRNA-capping enzyme nsP1. Interacts with host DDX1. Interacts with host DDX3. Interacts (via C-terminus) with host G3BP1; this interaction inhibits the formation of host stress granules on viral mRNAs and the nsp3-G3BP1 complexes bind viral RNAs and probably orchestrate the assembly of viral replication complexes. Interacts (via C-terminus) with host G3BP2; this interaction inhibits the formation of host stress granules on viral mRNAs and the nsp3-G3BP2 complexes bind viral RNAs and probably orchestrate the assembly of viral replication complexes. Interacts with mRNA-capping enzyme nsP1. Interacts with protease nsP2. interacts with itself. As to quaternary structure, interacts with RNA-directed RNA polymerase nsP4. Interacts with mRNA-capping enzyme nsP1. Interacts with KPNA1/karyopherin-alpha1; this interaction probably allows the active transport of protease nsP2 into the host nucleus. Requires Mg(2+) as cofactor. It depends on Mn(2+) as a cofactor. Post-translationally, specific enzymatic cleavages in vivo yield mature proteins. The processing of the polyprotein is temporally regulated. In early stages (1.7 hpi), P1234 is first cleaved in trans through its nsP2 protease activity, releasing P123' and nsP4, which associate to form the early replication complex. At the same time, P1234 is also cut at the nsP1/nsP2 site early in infection but with lower efficiency. After replication of the viral minus-strand RNAs (4 hpi), the polyproteins are cut at the nsP1/nsP2 and nsP2/nsP3 sites very efficiently, preventing accumulation of P123' and P1234 and allowing the formation of the late replication complex. NsP3'/nsP4 site is not cleaved anymore and P34 is produced rather than nsP4. Specific enzymatic cleavages in vivo yield mature proteins. The processing of the polyprotein is temporally regulated. In early stages (1.7 hpi), P123 is cleaved at the nsP1/nsP2 site with low efficiency. After replication of the viral minus-strand RNAs (4 hpi), the polyproteins are cut at the nsP1/nsP2 and nsP2/nsP3 sites very efficiently, preventing accumulation of P123 and allowing the formation of the late replication complex. In terms of processing, palmitoylated by host palmitoyltransferases ZDHHC2 and ZDHHC19. Post-translationally, phosphorylated by host on serines and threonines. Ubiquitinated; targets the protein for rapid degradation via the ubiquitin system. Nsp4 is present in extremely low quantities due to low frequency of translation through the amber stop-codon and the degradation by the ubiquitin pathway.

The protein resides in the host cytoplasmic vesicle membrane. The protein localises to the host cell membrane. Its subcellular location is the host cell projection. It localises to the host filopodium. It is found in the host nucleus. The protein resides in the host cytoplasm. It catalyses the reaction GTP + S-adenosyl-L-methionine = N(7)-methyl-GTP + S-adenosyl-L-homocysteine. The enzyme catalyses N(7)-methyl-GTP + L-histidyl-[protein] = N(tele)-(N(7)-methylguanosine 5'-phospho)-L-histidyl-[protein] + diphosphate. It carries out the reaction N(tele)-(N(7)-methylguanosine 5'-phospho)-L-histidyl-[protein] + a 5'-end diphospho-(purine-ribonucleoside) in mRNA + H(+) = a 5'-end (N(7)-methyl 5'-triphosphoguanosine)-(purine-ribonucleoside) in mRNA + L-histidyl-[protein]. The catalysed reaction is a 5'-end triphospho-ribonucleoside in mRNA + H2O = a 5'-end diphospho-ribonucleoside in mRNA + phosphate + H(+). It catalyses the reaction a ribonucleoside 5'-triphosphate + H2O = a ribonucleoside 5'-diphosphate + phosphate + H(+). The enzyme catalyses ATP + H2O = ADP + phosphate + H(+). It carries out the reaction RNA(n) + a ribonucleoside 5'-triphosphate = RNA(n+1) + diphosphate. The catalysed reaction is RNA(n) + ATP = RNA(n)-3'-adenine ribonucleotide + diphosphate. It catalyses the reaction 4-O-(ADP-D-ribosyl)-L-aspartyl-[protein] + H2O = L-aspartyl-[protein] + ADP-D-ribose + H(+). The enzyme catalyses 5-O-(ADP-D-ribosyl)-L-glutamyl-[protein] + H2O = L-glutamyl-[protein] + ADP-D-ribose + H(+). It carries out the reaction ADP-alpha-D-ribose 1''-phosphate + H2O = ADP-D-ribose + phosphate. In terms of biological role, inactive precursor of the viral replicase, which is activated by cleavages carried out by the viral protease nsP2. Its function is as follows. The early replication complex formed by the polyprotein P123 and nsP4 synthesizes minus-strand RNAs. As soon P123 is cleaved into mature proteins, the plus-strand RNAs synthesis begins. Functionally, the early replication complex formed by the polyprotein P123' and nsP4 synthesizes minus-strand RNAs. Polyprotein P123' is a short-lived polyprotein that accumulates during early stage of infection. As soon P123' is cleaved into mature proteins, the plus-strand RNAs synthesis begins. Cytoplasmic capping enzyme that catalyzes two virus-specific reactions: methyltransferase and nsP1 guanylyltransferase. mRNA-capping is necessary since all viral RNAs are synthesized in the cytoplasm, and host capping enzymes are restricted to the nucleus. The enzymatic reaction involves a covalent link between 7-methyl-GMP and nsP1, whereas eukaryotic capping enzymes form a covalent complex only with GMP. nsP1 capping consists in the following reactions: GTP is first methylated into 7-methyl-GMP and then is covalently linked to nsP1 to form the m7GMp-nsP1 complex from which 7-methyl-GMP complex is transferred to the mRNA to create the cap structure. NsP1 is needed for the initiation of the minus-strand RNAs synthesis. Probably serves as a membrane anchor for the replication complex composed of nsP1-nsP4. Palmitoylated nsP1 is remodeling host cell cytoskeleton, and induces filopodium-like structure formation at the surface of the host cell. In terms of biological role, multifunctional protein whose N-terminus is part of the RNA polymerase complex and displays NTPase, RNA triphosphatase and helicase activities. NTPase and RNA triphosphatase are involved in viral RNA capping and helicase keeps a check on the dsRNA replication intermediates. The C-terminus harbors a protease that specifically cleaves the polyproteins and releases the mature proteins. Required for the shutoff of minus-strand RNAs synthesis. Specifically inhibits the host IFN response by promoting the nuclear export of host STAT1. Also inhibits host transcription by inducing rapid proteasome-dependent degradation of POLR2A, a catalytic subunit of the RNAPII complex. The resulting inhibition of cellular protein synthesis serves to ensure maximal viral gene expression and to evade host immune response. Its function is as follows. Seems to be essential for minus-strand RNAs and subgenomic 26S mRNAs synthesis. Displays mono-ADP-ribosylhydrolase activity. ADP-ribosylation is a post-translational modification that controls various processes of the host cell and the virus probably needs to revert it for optimal viral replication. Binds proteins of FXR family and sequesters them into the viral RNA replication complexes thereby inhibiting the formation of host stress granules on viral mRNAs. The nsp3'-FXR complexes bind viral RNAs and probably orchestrate the assembly of viral replication complexes, thanks to the ability of FXR family members to self-assemble and bind DNA. Functionally, seems to be essential for minus-strand RNAs and subgenomic 26S mRNAs synthesis. Displays mono-ADP-ribosylhydrolase activity. ADP-ribosylation is a post-translantional modification that controls various processes of the host cell and the virus probably needs to revert it for optimal viral replication. Binds proteins of G3BP family and sequesters them into the viral RNA replication complexes thereby inhibiting the formation of host stress granules on viral mRNAs. The nsp3-G3BP complexes bind viral RNAs and probably orchestrate the assembly of viral replication complexes, thanks to the ability of G3BP family members to self-assemble and bind DNA. RNA dependent RNA polymerase. Replicates genomic and antigenomic RNA by recognizing replications specific signals. The early replication complex formed by the polyprotein P123 and nsP4 synthesizes minus-strand RNAs. The late replication complex composed of fully processed nsP1-nsP4 is responsible for the production of genomic and subgenomic plus-strand RNAs. The core catalytic domain of nsP4 also possesses terminal adenylyltransferase (TATase) activity that is probably involved in maintenance and repair of the poly(A) tail, an element required for replication of the viral genome. This Getah virus (GETV) protein is Polyprotein P1234.